We begin with the raw amino-acid sequence, 527 residues long: Tetanolysin (527 aa).

An N-terminal signal peptide occupies residues 1–32; that stretch reads MNKNVLKFVSRSLLIFSMTGLISNYNSSNVLA. A run of 4 beta stranded transmembrane segments spans residues 215 to 228, 235 to 244, 313 to 322, and 330 to 342; these read QSQL…NFKA, IDFDSIFKGE, SSHVKAAFKA, and SSNA…LNQS. The short motif at 484-494 is the Conserved undecapeptide element; sequence ECTGLAWEWWR. Positions 516–517 match the Cholesterol binding motif; that stretch reads TL.

This sequence belongs to the cholesterol-dependent cytolysin family. In terms of assembly, homooligomeric pore complex containing 35-50 subunits; when inserted in the host membrane. In terms of processing, purified 48 and 53 kDa proteins with 4 different pIs (6.1, 5.6, 5.3 and 6.6) in decreasing order of activity.

It localises to the secreted. It is found in the host cell membrane. Its activity is regulated as follows. Cytolysis of host cells is inhibited by cholesterol. A cholesterol-dependent toxin that causes cytolysis by forming pores in cholesterol-containing host membranes. After binding to target membranes, the protein undergoes a major conformation change, leading to its insertion in the host membrane and formation of an oligomeric pore complex. Cholesterol is required for binding to host membranes, membrane insertion and pore formation; cholesterol binding is mediated by a Thr-Leu pair in the C-terminus. This is Tetanolysin from Clostridium tetani (strain Massachusetts / E88).